A 970-amino-acid chain; its full sequence is Isoleucine--tRNA ligase (970 aa).

Positions 65-75 (PYANGHLHIGH) match the 'HIGH' region motif. L-isoleucyl-5'-AMP is bound at residue glutamate 608. A 'KMSKS' region motif is present at residues 649-653 (KMSKS). Lysine 652 lines the ATP pocket. Positions 943, 946, 962, and 965 each coordinate Zn(2+).

This sequence belongs to the class-I aminoacyl-tRNA synthetase family. IleS type 1 subfamily. In terms of assembly, monomer. The cofactor is Zn(2+).

It is found in the cytoplasm. It catalyses the reaction tRNA(Ile) + L-isoleucine + ATP = L-isoleucyl-tRNA(Ile) + AMP + diphosphate. Functionally, catalyzes the attachment of isoleucine to tRNA(Ile). As IleRS can inadvertently accommodate and process structurally similar amino acids such as valine, to avoid such errors it has two additional distinct tRNA(Ile)-dependent editing activities. One activity is designated as 'pretransfer' editing and involves the hydrolysis of activated Val-AMP. The other activity is designated 'posttransfer' editing and involves deacylation of mischarged Val-tRNA(Ile). In Ruegeria pomeroyi (strain ATCC 700808 / DSM 15171 / DSS-3) (Silicibacter pomeroyi), this protein is Isoleucine--tRNA ligase.